The following is a 585-amino-acid chain: Arginine--tRNA ligase (585 aa).

Residues 130 to 140 (ANPTGPMHVGH) carry the 'HIGH' region motif.

It belongs to the class-I aminoacyl-tRNA synthetase family. Monomer.

It localises to the cytoplasm. It catalyses the reaction tRNA(Arg) + L-arginine + ATP = L-arginyl-tRNA(Arg) + AMP + diphosphate. This chain is Arginine--tRNA ligase, found in Methylorubrum extorquens (strain PA1) (Methylobacterium extorquens).